We begin with the raw amino-acid sequence, 320 residues long: Heterogeneous nuclear ribonucleoprotein A1 (320 aa).

Residue methionine 1 is modified to N-acetylmethionine. Residue serine 2 is modified to N-acetylserine; in Heterogeneous nuclear ribonucleoprotein A1, N-terminally processed. Phosphoserine is present on serine 2. Residue lysine 3 is modified to N6-acetyllysine; alternate. A Glycyl lysine isopeptide (Lys-Gly) (interchain with G-Cter in SUMO2); alternate cross-link involves residue lysine 3. A phosphoserine mark is found at serine 4 and serine 6. Positions 4 to 94 (SESPKEPEQL…EPKRAVSRED (91 aa)) are globular A domain. Lysine 8 is covalently cross-linked (Glycyl lysine isopeptide (Lys-Gly) (interchain with G-Cter in SUMO2)). RRM domains lie at 14–97 (RKLF…DSQR) and 105–184 (KKIF…LSKQ). Position 22 is a phosphoserine (serine 22). Lysine 78 participates in a covalent cross-link: Glycyl lysine isopeptide (Lys-Gly) (interchain with G-Cter in SUMO2). The tract at residues 95 to 185 (SQRPGAHLTV…EVRKALSKQE (91 aa)) is globular B domain. Lysine 113 is covalently cross-linked (Glycyl lysine isopeptide (Lys-Gly) (interchain with G-Cter in SUMO)). Residues lysine 179 and lysine 183 each participate in a glycyl lysine isopeptide (Lys-Gly) (interchain with G-Cter in SUMO2) cross-link. Residues 182–216 (SKQEMASASSSQRGRSGSGNFGGGRGGGFGGNDNF) are disordered. Serine 192 carries the phosphoserine; by MKNK2 modification. The residue at position 194 (arginine 194) is an Asymmetric dimethylarginine; alternate. Arginine 194 is subject to Dimethylated arginine; alternate. Arginine 194 is subject to Omega-N-methylarginine; alternate. Over residues 197–216 (SGSGNFGGGRGGGFGGNDNF) the composition is skewed to gly residues. A Phosphoserine modification is found at serine 199. 4 positions are modified to asymmetric dimethylarginine; alternate: arginine 206, arginine 218, arginine 225, and arginine 232. A Dimethylated arginine; alternate modification is found at arginine 206. 4 positions are modified to omega-N-methylarginine; alternate: arginine 206, arginine 218, arginine 225, and arginine 232. The RNA-binding RGG-box stretch occupies residues 218 to 240 (RGGNFSGRGGFGGSRGGGGYGGS). Arginine 225 carries the post-translational modification Dimethylated arginine; alternate. Residues 268-305 (NQSSNFGPMKGGNFGGRSLGPYGGGGQYFAKPRNQGGY) are nuclear targeting sequence. Residues 277–294 (KGGNFGGRSLGPYGGGGQ) are compositionally biased toward gly residues. The tract at residues 277–320 (KGGNFGGRSLGPYGGGGQYFAKPRNQGGYGGSSSSSSYGSGRRF) is disordered. Arginine 284 carries the post-translational modification Omega-N-methylarginine. Phosphoserine is present on serine 285. An N6-acetyllysine; alternate modification is found at lysine 298. Lysine 298 is covalently cross-linked (Glycyl lysine isopeptide (Lys-Gly) (interchain with G-Cter in SUMO2); alternate). Residue arginine 300 is modified to Omega-N-methylarginine. A compositionally biased stretch (low complexity) spans 308 to 320 (SSSSSSYGSGRRF). Serine 309 carries the phosphoserine modification. Phosphoserine; by MKNK2 occurs at positions 310, 311, and 312. Residues serine 313 and serine 316 each carry the phosphoserine modification. At arginine 318 the chain carries Omega-N-methylarginine.

Identified in the spliceosome C complex. Identified in a IGF2BP1-dependent mRNP granule complex containing untranslated mRNAs. Interacts with SEPT6, C9orf72, KHDRBS1, UBQLN2. Interacts with PPIA/CYPA. Post-translationally, sumoylated.

Its subcellular location is the nucleus. It is found in the cytoplasm. Involved in the packaging of pre-mRNA into hnRNP particles, transport of poly(A) mRNA from the nucleus to the cytoplasm and modulation of splice site selection. Plays a role in the splicing of pyruvate kinase PKM by binding repressively to sequences flanking PKM exon 9, inhibiting exon 9 inclusion and resulting in exon 10 inclusion and production of the PKM M2 isoform. Binds to the IRES and thereby inhibits the translation of the apoptosis protease activating factor APAF1. May bind to specific miRNA hairpins. The sequence is that of Heterogeneous nuclear ribonucleoprotein A1 (HNRNPA1) from Macaca mulatta (Rhesus macaque).